The chain runs to 184 residues: Cathelicidin-related peptide Pt_CRAMP2 (184 aa).

Residues 1 to 22 (MDGFFWKTWLVVAALAIGGTSS) form the signal peptide. A propeptide spanning residues 23–150 (LPHKPLTYEE…EDEKDQPRRV (128 aa)) is cleaved from the precursor. 2 disulfide bridges follow: C81-C92 and C103-C120. Over residues 125–144 (EDEEQNQEEEEEEEKEEDEK) the composition is skewed to acidic residues. The disordered stretch occupies residues 125–147 (EDEEQNQEEEEEEEKEEDEKDQP).

The protein belongs to the cathelicidin family. In terms of tissue distribution, expressed by the venom gland.

It is found in the secreted. Its subcellular location is the target cell membrane. Potent antimicrobial peptide against most of Gram-negative bacteria, some Gram-positive bacteria (Bacillus) and some fungi (C.albicans, P.pastoris, A.terreus, A.nidulans, and C.globosum). Adopts an amphipathic alpha helical conformation, that may allow to partition into the target membrane. No hemolytic and cytotoxic activities have been observed on mammalian cells. In Pseudonaja textilis (Eastern brown snake), this protein is Cathelicidin-related peptide Pt_CRAMP2.